Here is a 67-residue protein sequence, read N- to C-terminus: uncharacterized protein (67 aa).

The stretch at 17 to 47 (AASLQELEKKINTQIENNKAIMLRVKSVSHQ) forms a coiled coil.

This is an uncharacterized protein from Bacillus subtilis (strain 168).